Consider the following 216-residue polypeptide: Transmembrane emp24 domain-containing protein eca (216 aa).

An N-terminal signal peptide occupies residues 1–20; the sequence is MRDQFISLALILCVLHSACG. Over 21-182 the chain is Lumenal; that stretch reads LYFHISETER…FRHTSESTNS (162 aa). The region spanning 30–126 is the GOLD domain; that stretch reads RKCFIEEVPD…QLRVHLDIQV (97 aa). Residues 134–164 are a coiled coil; that stretch reads AHVAQKEKLTELQLRIRQLLDQVEQITKEQN. A helical transmembrane segment spans residues 183–203; it reads RVLWWSLAQTVVLVCMGFWQM. The Cytoplasmic portion of the chain corresponds to 204-216; it reads RHLKSFFEAKKLV. The Prevents secretion from ER signature appears at 213 to 216; it reads KKLV.

This sequence belongs to the EMP24/GP25L family.

It is found in the endoplasmic reticulum membrane. Eca and bai are essential, though not redundant, for dorsoventral patterning of the embryo. Specifically required during early embryogenesis for the activity of maternal tkv, while the zygotic tkv is not affected. Involved in Golgi organization. The sequence is that of Transmembrane emp24 domain-containing protein eca from Drosophila melanogaster (Fruit fly).